Reading from the N-terminus, the 257-residue chain is Type III pantothenate kinase (257 aa).

Met24–His31 contributes to the ATP binding site. Substrate-binding positions include Tyr96 and Gly100 to Arg103. Residue Asp102 is the Proton acceptor of the active site. Asp122 contacts K(+). Thr125 is a binding site for ATP. Thr180 is a substrate binding site.

The protein belongs to the type III pantothenate kinase family. As to quaternary structure, homodimer. Requires NH4(+) as cofactor. K(+) is required as a cofactor.

The protein localises to the cytoplasm. The enzyme catalyses (R)-pantothenate + ATP = (R)-4'-phosphopantothenate + ADP + H(+). The protein operates within cofactor biosynthesis; coenzyme A biosynthesis; CoA from (R)-pantothenate: step 1/5. In terms of biological role, catalyzes the phosphorylation of pantothenate (Pan), the first step in CoA biosynthesis. In Synechocystis sp. (strain ATCC 27184 / PCC 6803 / Kazusa), this protein is Type III pantothenate kinase.